The sequence spans 287 residues: Probable endoribonuclease YicC (287 aa).

This sequence belongs to the YicC/YloC family. A divalent metal cation is required as a cofactor.

Its function is as follows. Probably a ssRNA endonuclease. Might contribute to small RNA (sRNA) regulation. This is Probable endoribonuclease YicC from Haemophilus influenzae (strain ATCC 51907 / DSM 11121 / KW20 / Rd).